The chain runs to 294 residues: 4-hydroxy-tetrahydrodipicolinate synthase (294 aa).

Threonine 45 serves as a coordination point for pyruvate. The active-site Proton donor/acceptor is the tyrosine 133. Lysine 162 (schiff-base intermediate with substrate) is an active-site residue. Residue valine 204 coordinates pyruvate.

It belongs to the DapA family. As to quaternary structure, homotetramer; dimer of dimers.

Its subcellular location is the cytoplasm. It catalyses the reaction L-aspartate 4-semialdehyde + pyruvate = (2S,4S)-4-hydroxy-2,3,4,5-tetrahydrodipicolinate + H2O + H(+). It functions in the pathway amino-acid biosynthesis; L-lysine biosynthesis via DAP pathway; (S)-tetrahydrodipicolinate from L-aspartate: step 3/4. Catalyzes the condensation of (S)-aspartate-beta-semialdehyde [(S)-ASA] and pyruvate to 4-hydroxy-tetrahydrodipicolinate (HTPA). This Bartonella bacilliformis (strain ATCC 35685 / KC583 / Herrer 020/F12,63) protein is 4-hydroxy-tetrahydrodipicolinate synthase.